Reading from the N-terminus, the 151-residue chain is Single-stranded DNA-binding protein, mitochondrial (151 aa).

A mitochondrion-targeting transit peptide spans M1–Q16. One can recognise an SSB domain in the interval L30–S141. Phosphoserine is present on residues S67 and S79. An N6-acetyllysine modification is found at K113. Residue K122 is modified to N6-succinyllysine.

As to quaternary structure, homotetramer. Interacts with MPG/AAG, through inhibition of its glycosylase activity it potentially prevents formation of DNA breaks in ssDNA, ensuring that base removal primarily occurs in dsDNA. Interacts with POLDIP2. Interacts with PRIMPOL.

Its subcellular location is the mitochondrion. It localises to the mitochondrion matrix. The protein resides in the mitochondrion nucleoid. In terms of biological role, binds preferentially and cooperatively to pyrimidine rich single-stranded DNA (ss-DNA). In vitro, required to maintain the copy number of mitochondrial DNA (mtDNA) and plays a crucial role during mtDNA replication by stimulating the activity of the replisome components POLG and TWNK at the replication fork. Promotes the activity of the gamma complex polymerase POLG, largely by organizing the template DNA and eliminating secondary structures to favor ss-DNA conformations that facilitate POLG activity. In addition it is able to promote the 5'-3' unwinding activity of the mtDNA helicase TWNK. May also function in mtDNA repair. This chain is Single-stranded DNA-binding protein, mitochondrial (Ssbp1), found in Rattus norvegicus (Rat).